Consider the following 385-residue polypeptide: Pre-mRNA-splicing factor slt-11 (385 aa).

The segment at 157 to 233 is disordered; that stretch reads RKGREVDEEG…PPGPKDWLPP (77 aa). Over residues 171-187 the composition is skewed to low complexity; the sequence is GSSSGAGRATGGNPAVG. Residues 239-312 enclose the RRM domain; it reads MSLFVTGIED…CPLRVRWSVP (74 aa). The segment covering 320-331 has biased composition (basic and acidic residues); it reads KEQRSEMLRDGR. A disordered region spans residues 320–370; it reads KEQRSEMLRDGRSAFGSGQKTGGQKAIGGQNAQGGASGAQKDDASNLTIAA.

It belongs to the SLT11 family. Associated with the spliceosome.

It localises to the nucleus. Its function is as follows. Involved in pre-mRNA splicing. Facilitates the cooperative formation of U2/U6 helix II in association with stem II in the spliceosome. Binds to RNA. The sequence is that of Pre-mRNA-splicing factor slt-11 (slt-11) from Neurospora crassa (strain ATCC 24698 / 74-OR23-1A / CBS 708.71 / DSM 1257 / FGSC 987).